The primary structure comprises 512 residues: D-alanine--D-alanyl carrier protein ligase (512 aa).

152–153 (TS) is an ATP binding site. Asp-199 contributes to the D-alanine binding site. Residue 294–299 (NAYGPT) participates in ATP binding. Val-303 is a D-alanine binding site. Residues Asp-385, 397-400 (YGGR), and Lys-499 each bind ATP. Residue Lys-499 coordinates D-alanine.

The protein belongs to the ATP-dependent AMP-binding enzyme family. DltA subfamily.

The protein localises to the cytoplasm. The enzyme catalyses holo-[D-alanyl-carrier protein] + D-alanine + ATP = D-alanyl-[D-alanyl-carrier protein] + AMP + diphosphate. The protein operates within cell wall biogenesis; lipoteichoic acid biosynthesis. Catalyzes the first step in the D-alanylation of lipoteichoic acid (LTA), the activation of D-alanine and its transfer onto the D-alanyl carrier protein (Dcp) DltC. In an ATP-dependent two-step reaction, forms a high energy D-alanyl-AMP intermediate, followed by transfer of the D-alanyl residue as a thiol ester to the phosphopantheinyl prosthetic group of the Dcp. D-alanylation of LTA plays an important role in modulating the properties of the cell wall in Gram-positive bacteria, influencing the net charge of the cell wall. This is D-alanine--D-alanyl carrier protein ligase from Streptococcus equi subsp. equi (strain 4047).